The primary structure comprises 518 residues: Anthranilate synthase component 1 (518 aa).

L-tryptophan is bound by residues Ser-38 and 283–285 (PYM). Residue 324–325 (GT) coordinates chorismate. Residue Glu-357 participates in Mg(2+) binding. Chorismate-binding positions include Tyr-445, Arg-465, 479–481 (GAG), and Gly-481. Glu-494 is a binding site for Mg(2+).

Belongs to the anthranilate synthase component I family. In terms of assembly, heterotetramer consisting of two non-identical subunits: a beta subunit (TrpG) and a large alpha subunit (TrpE). Mg(2+) serves as cofactor.

The enzyme catalyses chorismate + L-glutamine = anthranilate + pyruvate + L-glutamate + H(+). Its pathway is amino-acid biosynthesis; L-tryptophan biosynthesis; L-tryptophan from chorismate: step 1/5. With respect to regulation, feedback inhibited by tryptophan. Functionally, part of a heterotetrameric complex that catalyzes the two-step biosynthesis of anthranilate, an intermediate in the biosynthesis of L-tryptophan. In the first step, the glutamine-binding beta subunit (TrpG) of anthranilate synthase (AS) provides the glutamine amidotransferase activity which generates ammonia as a substrate that, along with chorismate, is used in the second step, catalyzed by the large alpha subunit of AS (TrpE) to produce anthranilate. In the absence of TrpG, TrpE can synthesize anthranilate directly from chorismate and high concentrations of ammonia. This is Anthranilate synthase component 1 (trpE) from Corynebacterium glutamicum (strain ATCC 13032 / DSM 20300 / JCM 1318 / BCRC 11384 / CCUG 27702 / LMG 3730 / NBRC 12168 / NCIMB 10025 / NRRL B-2784 / 534).